The sequence spans 279 residues: Thymidylate synthase (279 aa).

Arg-133–Arg-134 serves as a coordination point for dUMP. Catalysis depends on Cys-154, which acts as the Nucleophile. Residues Arg-178–Asp-181, Asn-189, and His-219–Tyr-221 each bind dUMP. Residue Asp-181 participates in (6R)-5,10-methylene-5,6,7,8-tetrahydrofolate binding. Ala-278 lines the (6R)-5,10-methylene-5,6,7,8-tetrahydrofolate pocket.

This sequence belongs to the thymidylate synthase family. Bacterial-type ThyA subfamily. Homodimer.

Its subcellular location is the cytoplasm. The enzyme catalyses dUMP + (6R)-5,10-methylene-5,6,7,8-tetrahydrofolate = 7,8-dihydrofolate + dTMP. It participates in pyrimidine metabolism; dTTP biosynthesis. Catalyzes the reductive methylation of 2'-deoxyuridine-5'-monophosphate (dUMP) to 2'-deoxythymidine-5'-monophosphate (dTMP) while utilizing 5,10-methylenetetrahydrofolate (mTHF) as the methyl donor and reductant in the reaction, yielding dihydrofolate (DHF) as a by-product. This enzymatic reaction provides an intracellular de novo source of dTMP, an essential precursor for DNA biosynthesis. The protein is Thymidylate synthase of Streptococcus pyogenes serotype M12 (strain MGAS2096).